Reading from the N-terminus, the 232-residue chain is MPERVIGILGGMGPLATADLFRRIVEKTPAKRDQDHPRIIIYNNPKIPDRTAFILGNGPDPRPELITSARKLEECGADFIIMPCNTAHFFAGTIQSSVIYPLVSMIEETAKRIEEMGLRKVGLLATDGTIKGMVYHRALLKRGIHIAVPNKKDQGLVMKAIYEGVKAGNLELGRELLLKVAKKLERRSEGIIAGCTEVSVVLKPGDLTVPLIDPMDVIAERAVKLALGVEDF.

Residue 49-51 (DRT) participates in substrate binding. The active-site Proton donor/acceptor is the Cys84. Residues 85-87 (NTA) and Lys166 each bind substrate. The active-site Proton donor/acceptor is the Cys195.

The protein belongs to the aspartate/glutamate racemases family.

The catalysed reaction is L-aspartate = D-aspartate. This Thermococcus sp. (strain KS-8) protein is Aspartate racemase.